The primary structure comprises 182 residues: Hypoxanthine/guanine phosphoribosyltransferase (182 aa).

This sequence belongs to the purine/pyrimidine phosphoribosyltransferase family. Archaeal HPRT subfamily. Homodimer.

It localises to the cytoplasm. The enzyme catalyses IMP + diphosphate = hypoxanthine + 5-phospho-alpha-D-ribose 1-diphosphate. The catalysed reaction is GMP + diphosphate = guanine + 5-phospho-alpha-D-ribose 1-diphosphate. Its pathway is purine metabolism; IMP biosynthesis via salvage pathway; IMP from hypoxanthine: step 1/1. Catalyzes a salvage reaction resulting in the formation of IMP that is energically less costly than de novo synthesis. The sequence is that of Hypoxanthine/guanine phosphoribosyltransferase from Methanosphaerula palustris (strain ATCC BAA-1556 / DSM 19958 / E1-9c).